The primary structure comprises 372 residues: Glutamate 5-kinase (372 aa).

Lys-14 is an ATP binding site. Residues Ser-54, Asp-141, and Asn-153 each coordinate substrate. ATP-binding positions include 173 to 174 (TD) and 215 to 221 (TGGMATK). The region spanning 280–358 (RGKLILDQGA…DDIESLLGYD (79 aa)) is the PUA domain.

The protein belongs to the glutamate 5-kinase family.

The protein localises to the cytoplasm. The enzyme catalyses L-glutamate + ATP = L-glutamyl 5-phosphate + ADP. It participates in amino-acid biosynthesis; L-proline biosynthesis; L-glutamate 5-semialdehyde from L-glutamate: step 1/2. Functionally, catalyzes the transfer of a phosphate group to glutamate to form L-glutamate 5-phosphate. This chain is Glutamate 5-kinase, found in Shewanella sediminis (strain HAW-EB3).